We begin with the raw amino-acid sequence, 778 residues long: Subtilisin-like protease SBT3.6 (778 aa).

An N-terminal signal peptide occupies residues 1–22 (MMNYRTSIYVVLSLVIFLNVQR). A propeptide spans 23–113 (SFVAESSAKR…VIPDSFYKLA (91 aa)) (activation peptide). One can recognise an Inhibitor I9 domain in the interval 34–113 (VHIVYLGEKQ…VIPDSFYKLA (80 aa)). N-linked (GlcNAc...) asparagine glycosylation is present at Asn-69. Positions 117 to 625 (TWDYLGLSAA…GGLVNPEKSA (509 aa)) constitute a Peptidase S8 domain. The active-site Charge relay system is Asp-147. N-linked (GlcNAc...) asparagine glycans are attached at residues Asn-158, Asn-180, Asn-202, and Asn-206. His-222 (charge relay system) is an active-site residue. Residues Asn-237, Asn-399, Asn-414, and Asn-541 are each glycosylated (N-linked (GlcNAc...) asparagine). The PA domain maps to 388-483 (SLVYPENPGN…ELGTDILLYT (96 aa)). The Charge relay system role is filled by Ser-556. N-linked (GlcNAc...) asparagine glycans are attached at residues Asn-648, Asn-724, and Asn-759.

This sequence belongs to the peptidase S8 family.

The protein resides in the secreted. In Arabidopsis thaliana (Mouse-ear cress), this protein is Subtilisin-like protease SBT3.6.